The following is a 789-amino-acid chain: uncharacterized protein (789 aa).

Disordered stretches follow at residues 107-326 (YQQD…NNNN), 426-491 (MLKS…NNNN), 523-625 (SVNF…ISNN), 666-751 (THTF…KGNN), and 765-789 (PTRF…YNQH). Over residues 113-123 (NNTDDEQEQEQ) the composition is skewed to acidic residues. 4 stretches are compositionally biased toward low complexity: residues 124–141 (EQQQ…TPIK), 151–194 (TSQT…ITPI), 201–213 (SIST…LRSS), and 225–270 (TSST…THNS). A compositionally biased stretch (acidic residues) spans 274-290 (IDDDDGDNNDEINDEND). Low complexity-rich tracts occupy residues 291–326 (INSN…NNNN) and 429–491 (SNNS…NNNN). The segment covering 523-549 (SVNFDRNQNQKSPFLNNTSMPNINFNE) has biased composition (polar residues). Low complexity-rich tracts occupy residues 550-581 (QSQQ…SINY), 602-617 (TSGS…NNSK), 696-722 (HIMN…SGSN), and 766-789 (TRFN…YNQH).

This is an uncharacterized protein from Dictyostelium discoideum (Social amoeba).